Reading from the N-terminus, the 575-residue chain is Inactive terpenoid synthase 20, chloroplastic (575 aa).

Residues 1–52 (MEAITKNGSLSQTLVHCGPKSLSSFIPVRCLRFSKNPFPKKLVVTRARTSIN) constitute a chloroplast transit peptide. 5 residues coordinate Mg(2+): Asp332, Asp336, Asp474, Thr478, and Glu482. The short motif at 332–336 (DDLYD) is the DDXXD motif element.

The protein belongs to the terpene synthase family. Tpsa subfamily. In terms of tissue distribution, predominantly expressed in roots but also in leaves and stems.

It localises to the plastid. Its subcellular location is the chloroplast. Its function is as follows. Does not possess diterpene synthase activity. The protein is Inactive terpenoid synthase 20, chloroplastic of Arabidopsis thaliana (Mouse-ear cress).